A 758-amino-acid polypeptide reads, in one-letter code: Amyloid beta precursor protein binding family B member 2 (758 aa).

Residue Ser-123 is modified to Phosphoserine. The segment at 134–154 (KLEGKEPHPQDSSSCEILPSQ) is disordered. Ser-160 bears the Phosphoserine mark. Over residues 176-190 (EQNRGNHHGTAEEKS) the composition is skewed to basic and acidic residues. 3 disordered regions span residues 176-195 (EQNRGNHHGTAEEKSQPVQG), 206-295 (LLLQ…LPPG), and 326-351 (DLQGSRKGSLSSVTPSPTPENEKQPW). Polar residues-rich tracts occupy residues 212–230 (NRPQSSPEDGQVATVSSSP) and 261–275 (SWTTLSQDSASPSSP). The WW domain occupies 290–322 (PDLPPGWKRVSDIAGTYYWHIPTGTTQWERPVS). The span at 331 to 340 (RKGSLSSVTP) shows a compositional bias: polar residues. 3 positions are modified to phosphoserine: Ser-334, Ser-409, and Ser-412. PID domains lie at 413 to 578 (DPEA…LQVD) and 584 to 736 (TELV…VTTN).

Interacts (via C-terminus) with APP (via C-terminus). Interacts with APLP2 (via cytoplasmic domain). In terms of tissue distribution, widely expressed.

It localises to the endoplasmic reticulum. Its subcellular location is the golgi apparatus. The protein localises to the early endosome. Functionally, plays a role in the maintenance of lens transparency, and may also play a role in muscle cell strength. Involved in hippocampal neurite branching and neuromuscular junction formation, as a result plays a role in spatial memory functioning. Activates transcription of APP. This Homo sapiens (Human) protein is Amyloid beta precursor protein binding family B member 2.